The following is a 108-amino-acid chain: Vitelline membrane protein 15a-1 (108 aa).

The signal sequence occupies residues 1-18 (MNKFIILAIFALAVGAMA). The region spanning 52-88 (HAPHAKCGANLLVGCAPSVAHVPCVPLPGHAPAHGYG) is the VM domain. The disordered stretch occupies residues 87-108 (YGHAPAPHYRAPESDSFDQFEE).

This sequence belongs to the vitelline membrane family. As to expression, expressed in the middle and posterior regions of the follicle cells.

It is found in the secreted. The polypeptide is Vitelline membrane protein 15a-1 (Aedes aegypti (Yellowfever mosquito)).